A 31-amino-acid polypeptide reads, in one-letter code: Ranatuerin-2 (31 aa).

C23 and C28 are joined by a disulfide.

The protein belongs to the frog skin active peptide (FSAP) family. Ranatuerin subfamily. In terms of tissue distribution, expressed by the skin glands.

The protein resides in the secreted. Antibacterial activity against Gram-positive bacterium S.aureus (MIC=60 uM). Shows no detectable hemolytic activity towards human erythrocytes. This is Ranatuerin-2 from Aquarana catesbeiana (American bullfrog).